The following is a 218-amino-acid chain: MGQKINPLGFRLGTTQGHHSLWFTQAKNYSEGLQEDQQIRNCIKNYVQKNTKISSGVEGIARIEIQKRIDLIQVIIFMGFPKPLLENQPRGIEELQTNLQKKCNSVNRKFNIAITKIAKPYGNPNILAEYIAGQLKNRVSFRKAMKKAIELTEQANTKGIQVQIAGRIDGKEIARVEWIRRGRVPLQTIRAKIDYCSYTVRTIYGVLGIKIWIFIDEE.

Positions 43 to 118 constitute a KH type-2 domain; sequence IKNYVQKNTK…KFNIAITKIA (76 aa).

It belongs to the universal ribosomal protein uS3 family. In terms of assembly, part of the 30S ribosomal subunit.

It localises to the plastid. The protein resides in the chloroplast. The protein is Small ribosomal subunit protein uS3c (rps3) of Coffea arabica (Arabian coffee).